The sequence spans 156 residues: Biotin carboxyl carrier protein of acetyl-CoA carboxylase (156 aa).

The Biotinyl-binding domain occupies 80–156 (GNVVRSPMVG…EFDQPLFTIV (77 aa)). An N6-biotinyllysine modification is found at Lys122.

As to quaternary structure, homodimer.

It participates in lipid metabolism; fatty acid biosynthesis. Functionally, this protein is a component of the acetyl coenzyme A carboxylase complex; first, biotin carboxylase catalyzes the carboxylation of the carrier protein and then the transcarboxylase transfers the carboxyl group to form malonyl-CoA. This chain is Biotin carboxyl carrier protein of acetyl-CoA carboxylase (accB), found in Pseudomonas aeruginosa (strain ATCC 15692 / DSM 22644 / CIP 104116 / JCM 14847 / LMG 12228 / 1C / PRS 101 / PAO1).